A 140-amino-acid polypeptide reads, in one-letter code: UPF0134 protein MPN_094 (140 aa).

It belongs to the UPF0134 family.

This Mycoplasma pneumoniae (strain ATCC 29342 / M129 / Subtype 1) (Mycoplasmoides pneumoniae) protein is UPF0134 protein MPN_094.